The chain runs to 272 residues: MAVSDADASSVDKVESITLQRVKQSEELLAQLYVVEESPRRMGRGPVQLMLAISVLSLVAFITTLLMRYNAFVTMYEDAQAKRSNFEVMIQRRDNLFGNLVKLTLNHAALEHSIFSHTSDKRKESVEAGKGGPIGSAIEQLMKQGGIGKLLGDGGAGKALLGADGGFGNALGRLMAIVEQYPTVQSADTYKHMMTSLVDMEDRIASKREEFNASAATYNVAITKWPWDYLAMITGFKRVEYFHEKPAGDTPIITPQIFQELLPLTHSQESKN.

Over 1–46 the chain is Cytoplasmic; sequence MAVSDADASSVDKVESITLQRVKQSEELLAQLYVVEESPRRMGRGP. A helical transmembrane segment spans residues 47–67; sequence VQLMLAISVLSLVAFITTLLM. Topologically, residues 68 to 272 are lumenal; it reads RYNAFVTMYE…PLTHSQESKN (205 aa).

It belongs to the LemA family.

The protein resides in the magnetosome membrane. Its subcellular location is the cell inner membrane. Essential for magnetosome formation. Not essential for formation of magnetosome membrane vesicles. One of 7 genes (mamLQBIEMO) able to induce magnetosome membrane biogenesis; coexpression of mamLQRBIEMO in a deletion of the 17 gene mamAB operon restores magnetosome vesicle formation but not magnetite biosynthesis. This chain is Magnetosome protein MamQ, found in Magnetospirillum gryphiswaldense (strain DSM 6361 / JCM 21280 / NBRC 15271 / MSR-1).